A 189-amino-acid polypeptide reads, in one-letter code: Peptidyl-tRNA hydrolase (189 aa).

Tyrosine 14 lines the tRNA pocket. The active-site Proton acceptor is the histidine 19. Positions 64, 66, and 112 each coordinate tRNA.

This sequence belongs to the PTH family. As to quaternary structure, monomer.

It localises to the cytoplasm. It catalyses the reaction an N-acyl-L-alpha-aminoacyl-tRNA + H2O = an N-acyl-L-amino acid + a tRNA + H(+). In terms of biological role, hydrolyzes ribosome-free peptidyl-tRNAs (with 1 or more amino acids incorporated), which drop off the ribosome during protein synthesis, or as a result of ribosome stalling. Functionally, catalyzes the release of premature peptidyl moieties from peptidyl-tRNA molecules trapped in stalled 50S ribosomal subunits, and thus maintains levels of free tRNAs and 50S ribosomes. The protein is Peptidyl-tRNA hydrolase of Brevibacillus brevis (strain 47 / JCM 6285 / NBRC 100599).